A 389-amino-acid chain; its full sequence is P2X purinoceptor 6 (389 aa).

Residues 1–45 (MQLQPAGTGNMASAAAAALVSWGFLDYKTEKYVLTRNCRVGVSQR) are Cytoplasmic-facing. The chain crosses the membrane as a helical span at residues 46 to 66 (LLQLAVVVYVIGWALLAKKGY). Topologically, residues 67–335 (QERDLAPQTS…LVTGQAGKFA (269 aa)) are extracellular. Intrachain disulfides connect C129–C179, C140–C163, and C146–C173. N167, N197, and N212 each carry an N-linked (GlcNAc...) asparagine glycan. Cystine bridges form between C230–C240 and C274–C283. Residues 336 to 356 (LIPTAITVGTGAAWLGMVTFL) traverse the membrane as a helical segment. The Cytoplasmic portion of the chain corresponds to 357 to 389 (CDLLLLYVDREAGFYWRTKYEEARAPKTTTNSS).

This sequence belongs to the P2X receptor family. Unlike most P2RXs, P2RX6 does not seem to form homotrimers. P2RX6 are likely to form as obligate heteromers with other P2RXs subunits. Forms heterotrimer with P2RX2 with a variable subunit stoichiometry determined by subunit expression levels. Forms heterotrimer with P2RX4; functional differences between homomeric P2RX4 and P2RX4/6 heterotrimer are minor. Forms a P2RX2/P2RX4/P2RX6 heterotrimer. Interacts with SF3A1; resulting in a reduction of the splicing activity. N-glycosylated. N-linked glycosylation can affect trafficking to the membrane and function. As to expression, predominantly expressed in skeletal muscle. Also expressed in lung.

It localises to the cell membrane. It is found in the endoplasmic reticulum. The protein resides in the nucleus. Its subcellular location is the nucleus inner membrane. It catalyses the reaction Ca(2+)(in) = Ca(2+)(out). Acts as a modulatory subunit rather than a functional channel. Unlike other P2XRs members, P2RX6 does not seem to form functional homotrimers. P2RX6 requires the presence of P2RX4 or P2RX2 to form functional heterotrimeric receptors at the plasma membrane. P2RX6 can be translocated to the nucleus, where it interacts with the splicing factor (SF3A1), to reduce the incidence of mRNA splicing. May function as a nuclear regulator of post-transcriptional modifications in neurons. The polypeptide is P2X purinoceptor 6 (P2rx6) (Mus musculus (Mouse)).